The primary structure comprises 347 residues: MKIMKHCSQTFPTTATGSIVGMDVGGTLEITNSFPFPVVEVPPESHFDNAAANPAAAAPRAKANTVYQAEMIRMLREVNVDANNVGWYTSANMGNFVNMNVIENQFFYQKEMNERTVALVHDVSRSSQGSLSLRAFRLSPRFMTAFKENKFTSEELQKSGLRYQDIFVELPVEIHNSHLITSFIHQLQTPNIPAPTDLPPSLAALESGPFVKSSILAPNYDNLTLSIDPFLEKNCDLLLDSIETHHTETNNFQYYQRSLAREQQRISAWQQKRKQENATRAALKQPLLPEDEWQRLFKLPQEPSRLESMLNSRQVDQYARQIDSFVSSTTGKMFAVKGNLLPGETAK.

Residues 1–142 (MKIMKHCSQT…LRAFRLSPRF (142 aa)) form the MPN domain.

This sequence belongs to the eIF-3 subunit H family. As to quaternary structure, component of the eukaryotic translation initiation factor 3 (eIF-3) complex.

The protein localises to the cytoplasm. Functionally, component of the eukaryotic translation initiation factor 3 (eIF-3) complex, which is involved in protein synthesis of a specialized repertoire of mRNAs and, together with other initiation factors, stimulates binding of mRNA and methionyl-tRNAi to the 40S ribosome. The eIF-3 complex specifically targets and initiates translation of a subset of mRNAs involved in cell proliferation. In Neosartorya fischeri (strain ATCC 1020 / DSM 3700 / CBS 544.65 / FGSC A1164 / JCM 1740 / NRRL 181 / WB 181) (Aspergillus fischerianus), this protein is Eukaryotic translation initiation factor 3 subunit H.